A 705-amino-acid chain; its full sequence is Protein arginine N-methyltransferase 7 (705 aa).

SAM-dependent MTase PRMT-type domains are found at residues 29–372 (QNSW…YSLW) and 381–705 (TKSV…QKKL).

It belongs to the class I-like SAM-binding methyltransferase superfamily. Protein arginine N-methyltransferase family. PRMT7 subfamily.

In terms of biological role, essential arginine methyltransferase that can both catalyze the formation of omega-N monomethylarginine (MMA) and symmetrical dimethylarginine (sDMA). Specifically mediates the symmetrical dimethylation of arginine residues in the small nuclear ribonucleoproteins SmD1 and SmD3. The protein is Protein arginine N-methyltransferase 7 (Art7) of Drosophila simulans (Fruit fly).